The chain runs to 572 residues: Oxygen-dependent choline dehydrogenase (572 aa).

9–38 (DYVIIGGGSAGSVLGARLSEDKDKNVLVLE) provides a ligand contact to FAD. His-477 acts as the Proton acceptor in catalysis.

Belongs to the GMC oxidoreductase family. It depends on FAD as a cofactor.

It carries out the reaction choline + A = betaine aldehyde + AH2. It catalyses the reaction betaine aldehyde + NAD(+) + H2O = glycine betaine + NADH + 2 H(+). It functions in the pathway amine and polyamine biosynthesis; betaine biosynthesis via choline pathway; betaine aldehyde from choline (cytochrome c reductase route): step 1/1. In terms of biological role, involved in the biosynthesis of the osmoprotectant glycine betaine. Catalyzes the oxidation of choline to betaine aldehyde and betaine aldehyde to glycine betaine at the same rate. This chain is Oxygen-dependent choline dehydrogenase, found in Staphylococcus epidermidis (strain ATCC 12228 / FDA PCI 1200).